The following is a 264-amino-acid chain: S-adenosylmethionine decarboxylase proenzyme (264 aa).

The active-site Schiff-base intermediate with substrate; via pyruvic acid is Ser-112. A Pyruvic acid (Ser); by autocatalysis modification is found at Ser-112. The active-site Proton acceptor; for processing activity is His-117. Cys-140 (proton donor; for catalytic activity) is an active-site residue.

It belongs to the prokaryotic AdoMetDC family. Type 2 subfamily. Heterooctamer of four alpha and four beta chains arranged as a tetramer of alpha/beta heterodimers. Requires pyruvate as cofactor. Post-translationally, is synthesized initially as an inactive proenzyme. Formation of the active enzyme involves a self-maturation process in which the active site pyruvoyl group is generated from an internal serine residue via an autocatalytic post-translational modification. Two non-identical subunits are generated from the proenzyme in this reaction, and the pyruvate is formed at the N-terminus of the alpha chain, which is derived from the carboxyl end of the proenzyme. The post-translation cleavage follows an unusual pathway, termed non-hydrolytic serinolysis, in which the side chain hydroxyl group of the serine supplies its oxygen atom to form the C-terminus of the beta chain, while the remainder of the serine residue undergoes an oxidative deamination to produce ammonia and the pyruvoyl group blocking the N-terminus of the alpha chain.

It carries out the reaction S-adenosyl-L-methionine + H(+) = S-adenosyl 3-(methylsulfanyl)propylamine + CO2. The protein operates within amine and polyamine biosynthesis; S-adenosylmethioninamine biosynthesis; S-adenosylmethioninamine from S-adenosyl-L-methionine: step 1/1. Functionally, catalyzes the decarboxylation of S-adenosylmethionine to S-adenosylmethioninamine (dcAdoMet), the propylamine donor required for the synthesis of the polyamines spermine and spermidine from the diamine putrescine. The polypeptide is S-adenosylmethionine decarboxylase proenzyme (Salmonella gallinarum (strain 287/91 / NCTC 13346)).